The chain runs to 329 residues: Microtubule-associated protein RP/EB family member 1C (329 aa).

Residues 13 to 115 form the Calponin-homology (CH) domain; the sequence is FVGRSEILAW…FMQWMKKYCD (103 aa). The segment covering 130–141 has biased composition (basic and acidic residues); sequence REASKGGKEATK. Residues 130-203 form a disordered region; it reads REASKGGKEA…SAKQSKPVPA (74 aa). Positions 174–185 are enriched in low complexity; sequence SNNTGTHHSSTG. One can recognise an EB1 C-terminal domain in the interval 193 to 263; it reads PSAKQSKPVP…LYAADGEDVG (71 aa). The required for nuclear localization stretch occupies residues 289–311; sequence KRKLIVNLDVDVAAITTLSPRQR.

It belongs to the MAPRE family. In terms of assembly, homodimer. Highly expressed in the root and shoot meristems, in guard cells of leaf stomata, pollen grains and pollen tubes.

Its subcellular location is the nucleus. The protein resides in the cytoplasm. It is found in the cytoskeleton. It localises to the spindle. The protein localises to the phragmoplast. Plant-specific EB1 subtype that functions preferentially at early stages of plant mitosis by regulating spindle positioning and chromosome segregation. Accumulates in the prophase nucleus and is required to maintain spindle bipolarity during premetaphase and/or metaphase and for efficient segregation of chromosomes at anaphase. May play a role in the dynamics of microtubule network in elongating pollen tubes. The polypeptide is Microtubule-associated protein RP/EB family member 1C (EB1C) (Arabidopsis thaliana (Mouse-ear cress)).